The following is a 290-amino-acid chain: Ribosomal protein L11 methyltransferase (290 aa).

S-adenosyl-L-methionine contacts are provided by threonine 135, glycine 158, aspartate 180, and asparagine 227.

Belongs to the methyltransferase superfamily. PrmA family.

It localises to the cytoplasm. It carries out the reaction L-lysyl-[protein] + 3 S-adenosyl-L-methionine = N(6),N(6),N(6)-trimethyl-L-lysyl-[protein] + 3 S-adenosyl-L-homocysteine + 3 H(+). Methylates ribosomal protein L11. This Chelativorans sp. (strain BNC1) protein is Ribosomal protein L11 methyltransferase.